We begin with the raw amino-acid sequence, 519 residues long: Putative thymidine phosphorylase (519 aa).

This sequence belongs to the thymidine/pyrimidine-nucleoside phosphorylase family. Type 2 subfamily.

It carries out the reaction thymidine + phosphate = 2-deoxy-alpha-D-ribose 1-phosphate + thymine. This is Putative thymidine phosphorylase from Maricaulis maris (strain MCS10) (Caulobacter maris).